Reading from the N-terminus, the 511-residue chain is Glutamate/gamma-aminobutyrate antiporter (511 aa).

The Cytoplasmic portion of the chain corresponds to 1-13 (MATSVQTGKAKQL). Residues 14–36 (TLLGFFAITASMVMAVYEYPTFA) form a helical membrane-spanning segment. The Periplasmic segment spans residues 37–40 (TSGF). The helical transmembrane segment at 41–64 (SLVFFLLLGGILWFIPVGLCAAEM) threads the bilayer. Topologically, residues 65–85 (ATVDGWEEGGVFAWVSNTLGP) are cytoplasmic. A helical membrane pass occupies residues 86-112 (RWGFAAISFGYLQIAIGFIPMLYFVLG). The Periplasmic segment spans residues 113-126 (ALSYILKWPALNED). Residues 127–147 (PITKTIAALIILWALALTQFG) traverse the membrane as a helical segment. The Cytoplasmic segment spans residues 148–151 (GTKY). The helical transmembrane segment at 152–180 (TARIAKVGFFAGILLPAFILIALAAIYLH) threads the bilayer. Topologically, residues 181-201 (SGAPVAIEMDSKTFFPDFSKV) are periplasmic. A helical membrane pass occupies residues 202–225 (GTLVVFVAFILSYMGVEASATHVN). The Cytoplasmic segment spans residues 226–229 (EMSN). A helical transmembrane segment spans residues 230–259 (PGRDYPLAMLLLMVAAICLSSVGGLSIAMV). Residues 260–288 (IPGNEINLSAGVMQTFTVLMSHVAPEIEW) lie on the Periplasmic side of the membrane. Residues 289 to 322 (TVRVISALLLLGVLAEIASWIVGPSRGMYVTAQK) form a helical membrane-spanning segment. The Cytoplasmic segment spans residues 323-337 (NLLPAAFAKMNKNGV). The chain crosses the membrane as a helical span at residues 338 to 359 (PVTLVISQLVITSIALIILTNT). Over 360–362 (GGG) the chain is Periplasmic. Residues 363–396 (NNMSFLIALALTVVIYLCAYFMLFIGYIVLVLKH) traverse the membrane as a helical segment. The Cytoplasmic segment spans residues 397–409 (PDLKRTFNIPGGK). The helical transmembrane segment at 410–430 (GVKLVVAIVGLLTSIMAFIVS) threads the bilayer. Residues 431–443 (FLPPDNIQGDSTD) are Periplasmic-facing. Residues 444–467 (MYVELLVVSFLVVLALPFILYAVH) traverse the membrane as a helical segment. At 468–511 (DRKGKANTGVTLEPINSQNAPKGHFFLHPRARSPHYIVMNDKKH) the chain is on the cytoplasmic side.

The protein belongs to the amino acid-polyamine-organocation (APC) superfamily. Glutamate:GABA antiporter (GGA) (TC 2.A.3.7) family. As to quaternary structure, monomer.

It is found in the cell inner membrane. The enzyme catalyses 4-aminobutanoate(in) + L-glutamate(out) = 4-aminobutanoate(out) + L-glutamate(in). Shows pH-dependent activity. The Glu/GABA transport activity is robust at pH 4.5 and rapidly decreases with increasing pH, with no detectable activity at pH 6.5 or above. The Glu analog L-trans-pyrrolidine-2,4-dicarboxylic acid (L-PDC) blocks the uptake of glutamate by selective inhibition. Involved in glutaminase-dependent acid resistance. Exchanges extracellular glutamate (Glu) for intracellular gamma-aminobutyric acid (GABA) under acidic conditions. The protonation states of substrates are crucial for transport. Selectively transports Glu with no net charge and GABA with a positive charge. Also efficiently transports glutamine and, to a smaller extent, methionine and leucine. When the extracellular pH drops below 2.5, can import L-glutamine and export either glutamate or GABA. The ability to survive the extremely acidic conditions of the stomach is essential for successful colonization of the host by commensal and pathogenic bacteria. The chain is Glutamate/gamma-aminobutyrate antiporter from Escherichia coli (strain K12).